The chain runs to 250 residues: Putative ABC transporter ATP-binding protein YjkB (250 aa).

In terms of domain architecture, ABC transporter spans 13 to 245 (ISFRSVRKSY…PQHEAAKEFL (233 aa)). 49–56 (GPSGSGKS) lines the ATP pocket.

The protein belongs to the ABC transporter superfamily.

The polypeptide is Putative ABC transporter ATP-binding protein YjkB (yjkB) (Bacillus subtilis (strain 168)).